A 412-amino-acid chain; its full sequence is Carboxypeptidase B1 (412 aa).

An N-terminal signal peptide occupies residues 1–18 (MIPRIVVVLLSVLAVVTA). The propeptide at 19-75 (RRSYEGYKVYGIVPESPDEAEILYQIRQSNPDLDFWHLTKQPGDEARVLVAPKDQRS) is activation peptide. The 291-residue stretch at 118 to 408 (SYLRHNEINE…VGIKAMALKV (291 aa)) folds into the Peptidase M14 domain. Positions 175 and 178 each coordinate Zn(2+). 175–178 (HARE) is a binding site for a peptide. N-linked (GlcNAc...) asparagine glycosylation occurs at Asn-205. Residues Arg-230 and 246-247 (NR) each bind a peptide. A disulfide bridge links Cys-240 with Cys-263. His-299 is a binding site for Zn(2+). A peptide-binding positions include 300-301 (SY) and Tyr-351. The Proton donor/acceptor role is filled by Glu-374. Residue Asn-395 is glycosylated (N-linked (GlcNAc...) asparagine).

Belongs to the peptidase M14 family. In terms of assembly, monomer. Interacts with Dengue virus type 2 (DENV2, MY89-88549 strain) envelope protein E. Interacts with Dengue virus envelope protein E type 3, type 2, type 4 and type 1 with decreasing strength. Zn(2+) serves as cofactor. In terms of tissue distribution, expressed in midgut (at protein level).

The protein resides in the endoplasmic reticulum. It catalyses the reaction Preferential release of a C-terminal lysine or arginine amino acid.. Inhibited by S.tuberosum metallocarboxypeptidase inhibitor. Its function is as follows. Carboxypeptidase that preferentially hydrolyzes arginine and lysine residues at the C-terminus. During infection by dengue virus, may play a role in preventing viral packaging, maturation, and release from the midgut. The polypeptide is Carboxypeptidase B1 (Aedes aegypti (Yellowfever mosquito)).